The chain runs to 998 residues: tRNA (34-2'-O)-methyltransferase regulator WDR6 (998 aa).

WD repeat units lie at residues 148–185 (LYYTKLHGSSFNKLAIISGNAFGELLVWQTQFPTESDP), 200–239 (AHNGVIHSIEFDLQSQLLVTTSDDRSVKFWNIQKSGDWTT), 250–291 (GHSS…ILKR), 294–333 (QFGAPIWRLGFSQDAEILYSTSSTGNLVGQNLKEVLNRPK), 476–515 (NNREPWITAALLISEQYLLLGNREGHVMLYCRSSASDDFQ), 527–566 (MGSNFFKLLSLNADNAHVMSGGHEAFLKYLSVRFSDSTLR), 567–608 (VSQR…LLQL), 664–704 (RNCN…LSQR), 779–821 (ARLM…QLDL), 826–865 (DIQRCPLGIQWIASKGMLLVSTTNGEVYGFDRTLETTYFQ), and 868–911 (LHVT…VEQK).

Belongs to the WD repeat WDR6 family. Interacts with Trm7-34.

It is found in the cytoplasm. Its function is as follows. Together with methyltransferase Trm7-34, methylates the 2'-O-ribose of nucleotides at position 34 of the anticodon loop of substrate tRNAs. The protein is tRNA (34-2'-O)-methyltransferase regulator WDR6 of Drosophila melanogaster (Fruit fly).